We begin with the raw amino-acid sequence, 326 residues long: B3 domain-containing protein At5g60130 (326 aa).

The TF-B3 DNA-binding region spans 12–110 (PKFFKVYLPD…CFHFCIYEHR (99 aa)). A disordered region spans residues 124 to 222 (EEIKVESDSD…DEDERQYLDD (99 aa)). Positions 143-199 (LSLDEDDDDSDYNCGEDNDSDDYADEAAVEKDDNDADDEDVDNVADDVPVEDDDYVE) are enriched in acidic residues.

It localises to the nucleus. The polypeptide is B3 domain-containing protein At5g60130 (Arabidopsis thaliana (Mouse-ear cress)).